The sequence spans 331 residues: 2-hydroxyacid dehydrogenase homolog (331 aa).

Residues 154–155 (HI), 234–236 (TSR), and D260 each bind NAD(+). Residue R236 is part of the active site. E265 is an active-site residue. H297 serves as the catalytic Proton donor. An NAD(+)-binding site is contributed by 297–300 (HQAF).

The protein belongs to the D-isomer specific 2-hydroxyacid dehydrogenase family.

The protein is 2-hydroxyacid dehydrogenase homolog (ddh) of Zymomonas mobilis subsp. mobilis (strain ATCC 31821 / ZM4 / CP4).